Reading from the N-terminus, the 205-residue chain is Meiotic nuclear division protein 1 homolog (205 aa).

Positions 79 to 147 (LHARKRKLET…CADLEKYKEC (69 aa)) form a coiled coil.

Belongs to the MND1 family.

It localises to the nucleus. Functionally, required for proper homologous chromosome pairing and efficient cross-over and intragenic recombination during meiosis. Stimulates both dmc1- and rad51-mediated homologous strand assimilation, which is required for the resolution of meiotic double-strand breaks. This is Meiotic nuclear division protein 1 homolog from Xenopus laevis (African clawed frog).